Consider the following 432-residue polypeptide: Enolase (432 aa).

Residue Q163 participates in (2R)-2-phosphoglycerate binding. E205 functions as the Proton donor in the catalytic mechanism. D242, E285, and D312 together coordinate Mg(2+). (2R)-2-phosphoglycerate is bound by residues K337, R366, S367, and K388. Residue K337 is the Proton acceptor of the active site.

It belongs to the enolase family. Requires Mg(2+) as cofactor.

It is found in the cytoplasm. The protein localises to the secreted. It localises to the cell surface. It carries out the reaction (2R)-2-phosphoglycerate = phosphoenolpyruvate + H2O. It functions in the pathway carbohydrate degradation; glycolysis; pyruvate from D-glyceraldehyde 3-phosphate: step 4/5. Catalyzes the reversible conversion of 2-phosphoglycerate (2-PG) into phosphoenolpyruvate (PEP). It is essential for the degradation of carbohydrates via glycolysis. The sequence is that of Enolase from Bifidobacterium longum subsp. infantis (strain ATCC 15697 / DSM 20088 / JCM 1222 / NCTC 11817 / S12).